The sequence spans 782 residues: Nezukol synthase KSL3 (782 aa).

Mg(2+) contacts are provided by Asp-529, Asp-533, Asn-677, and Glu-685. The DDXXD motif motif lies at 529–533 (DDVFD).

It belongs to the terpene synthase family. Mg(2+) is required as a cofactor. As to expression, highly expressed in leaves, and, at low levels, in stems, but barely in roots and flowers.

It catalyses the reaction (+)-copalyl diphosphate = miltiradiene + diphosphate. The enzyme catalyses (+)-copalyl diphosphate + H2O = nezukol + diphosphate. It participates in secondary metabolite biosynthesis; terpenoid biosynthesis. Functionally, involved in the biosynthesis of ent-kaurene diterpenoids natural products such as oridonin, miltiradiene, eriocalyxin B and nezukol, known to exhibit antitumor, anti-inflammatory and antibacterial activities. Catalyzes the conversion of (+)-copalyl diphosphate ((+)-CPP) to nezukol and miltiradiene. The reaction mechanism proceeds via the ionization of the diphosphate group of (+)-CPP, followed by formation of an intermediary pimar-15-en-8-yl(+) carbocation and neutralization of the carbocation by water capture at C-8 to yield nezukol. Can interact with ent-copalyl diphosphate (ent-CPP) but seems unable to use it as substrate. The protein is Nezukol synthase KSL3 of Isodon rubescens (Rabdosia rubescens).